The following is a 429-amino-acid chain: 4-hydroxyphenylacetate degradation bifunctional isomerase/decarboxylase (429 aa).

Approximate repeat units follow at residues 1–215 and 216–429; these read MKGT…NQTF and TWPL…ESAN. Residues Glu-276, Glu-278, and Asp-307 each coordinate a divalent metal cation.

This sequence belongs to the FAH family. In terms of assembly, monomer. Mg(2+) is required as a cofactor.

The catalysed reaction is (2E,4Z)-5-hydroxypenta-2,4-diene-1,2,5-tricarboxylate = (3E,5R)-5-carboxy-2-oxohept-3-enedioate. The enzyme catalyses (3E,5R)-5-carboxy-2-oxohept-3-enedioate + H(+) = (4Z)-2-oxohept-4-enedioate + CO2. Its pathway is aromatic compound metabolism; 4-hydroxyphenylacetate degradation; pyruvate and succinate semialdehyde from 4-hydroxyphenylacetate: step 4/7. It participates in aromatic compound metabolism; 4-hydroxyphenylacetate degradation; pyruvate and succinate semialdehyde from 4-hydroxyphenylacetate: step 5/7. Decarboxylates OPET (5-oxo-pent-3-ene-1,2,5-tricarboxylic acid) into HHDD (2-hydroxy-hept-2,4-diene-1,7-dioate) and isomerizes it to OHED (2-oxo-hept-3-ene-1,7-dioate). This Salmonella dublin protein is 4-hydroxyphenylacetate degradation bifunctional isomerase/decarboxylase (hpaG).